A 234-amino-acid polypeptide reads, in one-letter code: Ubiquitin domain-containing protein 2 (234 aa).

The disordered stretch occupies residues 1–46; the sequence is MGGCVGAQHDSSGSLNENSEGTGVALGRNQPLKKEKPKWKSDYPMT. Polar residues predominate over residues 9-21; that stretch reads HDSSGSLNENSEG. The span at 32-41 shows a compositional bias: basic and acidic residues; the sequence is LKKEKPKWKS. The 76-residue stretch at 152-227 folds into the Ubiquitin-like domain; it reads SQLRLRLSTG…VQVIMSQPLQ (76 aa).

It is found in the cytoplasm. In Bos taurus (Bovine), this protein is Ubiquitin domain-containing protein 2 (UBTD2).